A 442-amino-acid chain; its full sequence is MGKRSKTSRKGKKAWRANISSEDIEDFFEKTTRDALSGGNLSAAPSEDLFHVDKSHDLPVKRKIEKHRERVLRVDSILKKNPFVQLVPSSKPKLKKSKKTIVIEDKAPKQVQKSVGDDSVMADLWGDDSKGEHESNPRKIFKNPSIISAVEIEHPGCSYNPTTESHQDMLAEAVAQEMQKVYKTELGPAPVPLTIEGDTLSEDERYFLDVDNFSEGEDNENVENEVSEAGIKLKENPFVQLKPSSNTNLKKIEDKTPRQAQKSVGDDSVMVDLLGDDIKEDLKYFLEVGNVGEGEDNKDVKIEVSEAGNNVSRKTKRVTRVELNKRCRQKALRKKETKEKAKEKILNEIDSLPNILEEIAKEDEDKQNKHLRRVIAKQEVLKIRPPRLGKYKFEAPPVQVLLTEEMTGSLRKLKACCTLARDRFKSLEKRGILVPSKQIRRF.

The interval 242 to 264 is disordered; that stretch reads KPSSNTNLKKIEDKTPRQAQKSV.

This sequence belongs to the NOP53 family.

The protein resides in the nucleus. It localises to the nucleolus. Its subcellular location is the nucleoplasm. In terms of biological role, may play a role in ribosome biogenesis. The sequence is that of Ribosome biogenesis protein NOP53 from Arabidopsis thaliana (Mouse-ear cress).